The primary structure comprises 138 residues: Ribosome-binding factor A (138 aa).

The tract at residues 116–138 (VAQDSQHQEGPASPDAKPESTEE) is disordered.

This sequence belongs to the RbfA family. In terms of assembly, monomer. Binds 30S ribosomal subunits, but not 50S ribosomal subunits or 70S ribosomes.

It localises to the cytoplasm. In terms of biological role, one of several proteins that assist in the late maturation steps of the functional core of the 30S ribosomal subunit. Associates with free 30S ribosomal subunits (but not with 30S subunits that are part of 70S ribosomes or polysomes). Required for efficient processing of 16S rRNA. May interact with the 5'-terminal helix region of 16S rRNA. In Pseudomonas syringae pv. tomato (strain ATCC BAA-871 / DC3000), this protein is Ribosome-binding factor A.